Consider the following 140-residue polypeptide: Transmembrane protein 107 (140 aa).

The next 2 membrane-spanning stretches (helical) occupy residues 7-27 and 53-73; these read LVPSRFLTLLAHLVIVITLFW and LVAALCLTLGLFAVELAGFLS. Asn79 carries an N-linked (GlcNAc...) asparagine glycan. The next 2 membrane-spanning stretches (helical) occupy residues 83-103 and 113-133; these read SLLSIAAHCSASVALSFFIFE and IFAFCSAFPAVTETALFIAVF.

As to quaternary structure, part of the tectonic-like complex (also named B9 complex). Interacts with TMEM237, TMEM231, MKS1 and TMEM216.

It localises to the membrane. The protein localises to the cell projection. It is found in the cilium. Plays a role in cilia formation and embryonic patterning. Requires for normal Sonic hedgehog (Shh) signaling in the neural tube and acts in combination with GLI2 and GLI3 to pattern ventral and intermediate neuronal cell types. During ciliogenesis regulates the ciliary transition zone localization of some MKS complex proteins. The protein is Transmembrane protein 107 of Rattus norvegicus (Rat).